A 353-amino-acid chain; its full sequence is Photosystem II protein D1 (353 aa).

Thr-2 is subject to N-acetylthreonine. Thr-2 carries the post-translational modification Phosphothreonine. A run of 3 helical transmembrane segments spans residues 29 to 46 (YIGWFGVLMIPTLLTATS), 118 to 133 (HFLLGVACYMGREWEL), and 142 to 156 (WIAVAYSAPVAAATA). A chlorophyll a-binding site is contributed by His-118. Tyr-126 contacts pheophytin a. Residues Asp-170 and Glu-189 each coordinate [CaMn4O5] cluster. A helical transmembrane segment spans residues 197 to 218 (FHMLGVAGVFGGSLFSAMHGSL). His-198 is a binding site for chlorophyll a. A quinone is bound by residues His-215 and 264–265 (SF). Position 215 (His-215) interacts with Fe cation. A Fe cation-binding site is contributed by His-272. Residues 274–288 (FLTAWPVVGIWFTAL) traverse the membrane as a helical segment. His-332, Glu-333, Asp-342, and Ala-344 together coordinate [CaMn4O5] cluster. The propeptide occupies 345 to 353 (VVEAPSTNG).

The protein belongs to the reaction center PufL/M/PsbA/D family. PSII is composed of 1 copy each of membrane proteins PsbA, PsbB, PsbC, PsbD, PsbE, PsbF, PsbH, PsbI, PsbJ, PsbK, PsbL, PsbM, PsbT, PsbX, PsbY, PsbZ, Psb30/Ycf12, at least 3 peripheral proteins of the oxygen-evolving complex and a large number of cofactors. It forms dimeric complexes. It depends on The D1/D2 heterodimer binds P680, chlorophylls that are the primary electron donor of PSII, and subsequent electron acceptors. It shares a non-heme iron and each subunit binds pheophytin, quinone, additional chlorophylls, carotenoids and lipids. D1 provides most of the ligands for the Mn4-Ca-O5 cluster of the oxygen-evolving complex (OEC). There is also a Cl(-1) ion associated with D1 and D2, which is required for oxygen evolution. The PSII complex binds additional chlorophylls, carotenoids and specific lipids. as a cofactor. Tyr-161 forms a radical intermediate that is referred to as redox-active TyrZ, YZ or Y-Z. Post-translationally, C-terminally processed by CTPA; processing is essential to allow assembly of the oxygen-evolving complex and thus photosynthetic growth.

Its subcellular location is the plastid. The protein localises to the chloroplast thylakoid membrane. The enzyme catalyses 2 a plastoquinone + 4 hnu + 2 H2O = 2 a plastoquinol + O2. In terms of biological role, photosystem II (PSII) is a light-driven water:plastoquinone oxidoreductase that uses light energy to abstract electrons from H(2)O, generating O(2) and a proton gradient subsequently used for ATP formation. It consists of a core antenna complex that captures photons, and an electron transfer chain that converts photonic excitation into a charge separation. The D1/D2 (PsbA/PsbD) reaction center heterodimer binds P680, the primary electron donor of PSII as well as several subsequent electron acceptors. This chain is Photosystem II protein D1, found in Aethionema cordifolium (Lebanon stonecress).